The sequence spans 89 residues: MALSQERKREIIEQFKIHENDTGSPEVQIAILTEQINNLNEHLRVHKKDHHSRRGLLKMVGKRRNLLTYLRNKDIARYRELINKLGLRR.

It belongs to the universal ribosomal protein uS15 family. As to quaternary structure, part of the 30S ribosomal subunit. Forms a bridge to the 50S subunit in the 70S ribosome, contacting the 23S rRNA.

Functionally, one of the primary rRNA binding proteins, it binds directly to 16S rRNA where it helps nucleate assembly of the platform of the 30S subunit by binding and bridging several RNA helices of the 16S rRNA. In terms of biological role, forms an intersubunit bridge (bridge B4) with the 23S rRNA of the 50S subunit in the ribosome. The sequence is that of Small ribosomal subunit protein uS15 from Geobacillus sp. (strain WCH70).